The primary structure comprises 77 residues: Conotoxin VnMEKL-0223 (77 aa).

Residues 1–19 form the signal peptide; it reads MQKLTILLLVAAVLMSTQA. The propeptide occupies 20–37; it reads LIKGGGEKRPKEKIKFLS. 3 cysteine pairs are disulfide-bonded: C51–C65, C58–C69, and C64–C74.

Belongs to the conotoxin O2 superfamily. Expressed by the venom duct.

The protein resides in the secreted. This Conus ventricosus (Mediterranean cone) protein is Conotoxin VnMEKL-0223.